The chain runs to 183 residues: UPF0134 protein MPN_100 (183 aa).

Belongs to the UPF0134 family.

The protein is UPF0134 protein MPN_100 of Mycoplasma pneumoniae (strain ATCC 29342 / M129 / Subtype 1) (Mycoplasmoides pneumoniae).